A 309-amino-acid chain; its full sequence is Prepilin leader peptidase/N-methyltransferase (309 aa).

Residues 35-55 (MQLAFAIVLGLVVGSFINVVV) form a helical membrane-spanning segment. Zn(2+)-binding residues include Cys-96, Cys-99, Cys-121, and Cys-124. Transmembrane regions (helical) follow at residues 147–167 (LALF…AALL), 183–203 (LTLP…FASL), 207–227 (VIGA…FKLL), 230–250 (IEGI…WLGW), 253–273 (LPQV…VATW), and 288–308 (FLAA…LLLG).

It belongs to the peptidase A24 family. Zn(2+) serves as cofactor.

The protein resides in the cell inner membrane. The enzyme catalyses Typically cleaves a -Gly-|-Phe- bond to release an N-terminal, basic peptide of 5-8 residues from type IV prepilin, and then N-methylates the new N-terminal amino group, the methyl donor being S-adenosyl-L-methionine.. Its function is as follows. Plays an essential role in type IV pili and type II pseudopili formation by proteolytically removing the leader sequence from substrate proteins and subsequently monomethylating the alpha-amino group of the newly exposed N-terminal phenylalanine. This chain is Prepilin leader peptidase/N-methyltransferase (gspO), found in Burkholderia pseudomallei (strain K96243).